Reading from the N-terminus, the 311-residue chain is Chemotaxis protein CheV3 (311 aa).

Residues 13 to 164 (EIELVDFRIY…LESILDDLKL (152 aa)) form the CheW-like domain. The Response regulatory domain occupies 182 to 308 (EVLFLDDSKT…FTEEISKILD (127 aa)). Aspartate 241 is modified (4-aspartylphosphate).

Plays a role in chemotaxis signal transduction system in order to colonize the host stomach. May act as a phosphate sink to control the flow of phosphate to CheAY. The sequence is that of Chemotaxis protein CheV3 from Helicobacter pylori (strain ATCC 700392 / 26695) (Campylobacter pylori).